A 520-amino-acid chain; its full sequence is Ribonuclease Y (520 aa).

A helical transmembrane segment spans residues 4–24; it reads TVWILISILLATVGAVVGFFV. The tract at residues 86 to 116 is disordered; sequence KQENRLMQKEENLDRKDETLDKREQQLEKKE. One can recognise a KH domain in the interval 210-273; it reads TVSVVNLPND…ETARIALDKL (64 aa). Residues 336-429 form the HD domain; that stretch reads VLKHSMEVAY…VAAADALSAA (94 aa).

The protein belongs to the RNase Y family.

The protein localises to the cell membrane. Endoribonuclease that initiates mRNA decay. This is Ribonuclease Y from Bacillus cereus (strain ATCC 10987 / NRS 248).